We begin with the raw amino-acid sequence, 312 residues long: Beta-ketoacyl-[acyl-carrier-protein] synthase III (312 aa).

Catalysis depends on residues C112 and H237. The ACP-binding stretch occupies residues 238–242 (QANIR). The active site involves N267.

It belongs to the thiolase-like superfamily. FabH family. Homodimer.

The protein localises to the cytoplasm. It carries out the reaction malonyl-[ACP] + acetyl-CoA + H(+) = 3-oxobutanoyl-[ACP] + CO2 + CoA. Its pathway is lipid metabolism; fatty acid biosynthesis. Its function is as follows. Catalyzes the condensation reaction of fatty acid synthesis by the addition to an acyl acceptor of two carbons from malonyl-ACP. Catalyzes the first condensation reaction which initiates fatty acid synthesis and may therefore play a role in governing the total rate of fatty acid production. Possesses both acetoacetyl-ACP synthase and acetyl transacylase activities. Its substrate specificity determines the biosynthesis of branched-chain and/or straight-chain of fatty acids. This Listeria innocua serovar 6a (strain ATCC BAA-680 / CLIP 11262) protein is Beta-ketoacyl-[acyl-carrier-protein] synthase III.